A 125-amino-acid chain; its full sequence is L-fucose mutarotase (125 aa).

His-13 functions as the Proton donor in the catalytic mechanism.

The protein belongs to the RbsD / FucU family. FucU mutarotase subfamily.

It catalyses the reaction alpha-L-fucose = beta-L-fucose. Active toward L-galactopyranoside and D-arabinopyranoside but no D-fucopyranoside activity detected. In terms of biological role, plays a role in the catabolism of L-fucose. Involved in the anomeric conversion of L-fucose. This is L-fucose mutarotase from Xanthomonas campestris pv. campestris (strain ATCC 33913 / DSM 3586 / NCPPB 528 / LMG 568 / P 25).